Consider the following 99-residue polypeptide: Co-chaperonin GroES (99 aa).

This sequence belongs to the GroES chaperonin family. In terms of assembly, heptamer of 7 subunits arranged in a ring. Interacts with the chaperonin GroEL.

The protein resides in the cytoplasm. Its function is as follows. Together with the chaperonin GroEL, plays an essential role in assisting protein folding. The GroEL-GroES system forms a nano-cage that allows encapsulation of the non-native substrate proteins and provides a physical environment optimized to promote and accelerate protein folding. GroES binds to the apical surface of the GroEL ring, thereby capping the opening of the GroEL channel. In Corynebacterium jeikeium (strain K411), this protein is Co-chaperonin GroES.